A 104-amino-acid polypeptide reads, in one-letter code: L-rhamnose mutarotase (104 aa).

Y18 lines the substrate pocket. H22 functions as the Proton donor in the catalytic mechanism. Substrate contacts are provided by residues Y41 and 76-77 (WW).

The protein belongs to the rhamnose mutarotase family. Homodimer.

Its subcellular location is the cytoplasm. The catalysed reaction is alpha-L-rhamnose = beta-L-rhamnose. The protein operates within carbohydrate metabolism; L-rhamnose metabolism. In terms of biological role, involved in the anomeric conversion of L-rhamnose. The chain is L-rhamnose mutarotase from Salmonella arizonae (strain ATCC BAA-731 / CDC346-86 / RSK2980).